Here is a 344-residue protein sequence, read N- to C-terminus: Biotin synthase (344 aa).

A Radical SAM core domain is found at 40–267 (AEVQVSTLLS…KSMVRLSAGR (228 aa)). [4Fe-4S] cluster-binding residues include C55, C59, and C62. [2Fe-2S] cluster contacts are provided by C99, C130, C190, and R262.

Belongs to the radical SAM superfamily. Biotin synthase family. In terms of assembly, homodimer. The cofactor is [4Fe-4S] cluster. It depends on [2Fe-2S] cluster as a cofactor.

The enzyme catalyses (4R,5S)-dethiobiotin + (sulfur carrier)-SH + 2 reduced [2Fe-2S]-[ferredoxin] + 2 S-adenosyl-L-methionine = (sulfur carrier)-H + biotin + 2 5'-deoxyadenosine + 2 L-methionine + 2 oxidized [2Fe-2S]-[ferredoxin]. The protein operates within cofactor biosynthesis; biotin biosynthesis; biotin from 7,8-diaminononanoate: step 2/2. Its function is as follows. Catalyzes the conversion of dethiobiotin (DTB) to biotin by the insertion of a sulfur atom into dethiobiotin via a radical-based mechanism. The polypeptide is Biotin synthase (Xanthomonas oryzae pv. oryzae (strain PXO99A)).